We begin with the raw amino-acid sequence, 166 residues long: Small ribosomal subunit protein uS5 (166 aa).

One can recognise an S5 DRBM domain in the interval 11–74 (LNEKLIAVNR…EKARRNMFTI (64 aa)).

Belongs to the universal ribosomal protein uS5 family. In terms of assembly, part of the 30S ribosomal subunit. Contacts proteins S4 and S8.

Functionally, with S4 and S12 plays an important role in translational accuracy. Its function is as follows. Located at the back of the 30S subunit body where it stabilizes the conformation of the head with respect to the body. This Aliivibrio salmonicida (strain LFI1238) (Vibrio salmonicida (strain LFI1238)) protein is Small ribosomal subunit protein uS5.